The sequence spans 321 residues: uncharacterized protein (321 aa).

The protein belongs to the carbohydrate kinase PfkB family.

This is an uncharacterized protein from Escherichia coli (strain K12).